The chain runs to 465 residues: Exoenzymes regulatory protein AepA (465 aa).

The signal sequence occupies residues 1–21; that stretch reads MKFNVKMLSVTLGLFTSHAFA.

It belongs to the metallo-dependent hydrolases superfamily.

In terms of biological role, involved in the control of extracellular enzymes production. Stimulates PEL, PEH, CEL, and PRT production. This Pectobacterium carotovorum subsp. carotovorum (Erwinia carotovora subsp. carotovora) protein is Exoenzymes regulatory protein AepA (aepA).